We begin with the raw amino-acid sequence, 430 residues long: MKLITILLLCSRLLPSLAQEEGAQELNCNDETVFQAVDTALKKYNAELESGNQFVLYRVTEGTKKDGAETLYSFKYQIKEGNCSVQSGLTWQDCDFKDAEEAATGECTTTLGKKENKFSVATQICNITPGKGPKKTEEDLCVGCFQPIPMDSSDLKPVLKHAVEHFNNNTKHTHLFALREVKSAHSQVVAGMNYKIIYSIVQTNCSKEDFPSLREDCVPLPYGDHGECTGHTHVDIHNTIAGFSQSCDLYPGDDLFELLPKNCRGCPREIPVDSPELKEALGHSIAQLNAQHNHIFYFKIDTVKKATSQVVAGVIYVIEFIARETNCSKQSKTELTADCETKHLGQSLNCNANVYMRPWENKVVPTVRCQALDMMISRPPGFSPFRLVRVQETKEGTTRLLNSCEYKGRLSKARAGPAPDHQAEASTVTP.

A signal peptide spans 1-18 (MKLITILLLCSRLLPSLA). Residue Q19 is modified to Pyrrolidone carboxylic acid. In terms of domain architecture, Cystatin kininogen-type 1 spans 28–131 (CNDETVFQAV…TQICNITPGK (104 aa)). Disulfide bonds link C28-C404, C83-C94, C107-C125, C141-C144, C205-C217, C228-C247, C263-C266, C327-C339, and C350-C369. An N-linked (GlcNAc...) asparagine glycan is attached at N82. The Cystatin kininogen-type 2 domain occupies 150-253 (MDSSDLKPVL…SQSCDLYPGD (104 aa)). N-linked (GlcNAc...) asparagine glycans are attached at residues N168 and N204. One can recognise a Cystatin kininogen-type 3 domain in the interval 272–375 (VDSPELKEAL…TVRCQALDMM (104 aa)). A glycan (N-linked (GlcNAc...) asparagine) is linked at N326. Residues 411–430 (SKARAGPAPDHQAEASTVTP) are disordered.

In terms of processing, as T-kinin is preceded by a Met instead of an Arg or Lys, it is not released from its precursor by either tissue or plasma kallikrein. Plasma.

Its subcellular location is the secreted. The protein localises to the extracellular space. Functionally, kininogens are plasma glycoproteins with a number of functions: (1) as precursor of the active peptide bradykinin they effect smooth muscle contraction, induction of hypotension and increase of vascular permeability. (2) They play a role in blood coagulation by helping to position optimally prekallikrein and factor XI next to factor XII. (3) They are inhibitor of thiol proteases. The chain is T-kininogen 1 (Map1) from Rattus norvegicus (Rat).